The following is a 719-amino-acid chain: Solute carrier family 15 member 2 (719 aa).

Over 1–43 the chain is Cytoplasmic; sequence MGKMKDKDVDAEKYEKAQRSPKLCGTNYPVSIAFIVVNEFCER. The helical transmembrane segment at 44–61 threads the bilayer; that stretch reads FSYYGMKAVLTLYFMNYL. Residues 62 to 69 are Extracellular-facing; that stretch reads HWDKNLST. N-linked (GlcNAc...) asparagine glycosylation is present at Asn-66. Residues 70–90 traverse the membrane as a helical segment; it reads AIYHAFSGLCYFTPLLGALIA. Topologically, residues 91–99 are cytoplasmic; the sequence is DSWLGKFKT. Residues 100–120 form a helical membrane-spanning segment; the sequence is IIYLSIVYVIGHVVKSVGAIP. Topologically, residues 121 to 125 are extracellular; the sequence is DVGDS. A helical membrane pass occupies residues 126–146; sequence TVHIALSMVGLGLIALGTGGI. The Cytoplasmic segment spans residues 147-169; sequence KPCVAAFGGDQFDEDNIDERRKF. Residues 170–190 traverse the membrane as a helical segment; it reads FSIFYMSINAGSVLSTIITPI. At 191-201 the chain is on the extracellular side; that stretch reads LRGDVQCFGGD. A helical membrane pass occupies residues 202-222; the sequence is CYALAFGVPAALMVIALVVFI. Residues 223 to 280 are Cytoplasmic-facing; it reads SGSGLYKKSPPEGNVLVRVCKCIGFAISNRWTNSKKSPKRSHWLDWAEEKYSKRLIQE. A helical transmembrane segment spans residues 281-301; sequence IKMVCRVLVLYIPLPMFWALF. Over 302–334 the chain is Extracellular; sequence DQQGSRWTLQATRMNMDFGGGFIIKPDQMQMLN. Residues 335 to 355 form a helical membrane-spanning segment; that stretch reads ALLILVFIPIFDMGIYPLVGL. The Cytoplasmic segment spans residues 356–367; sequence CRIKLTPLKKMA. Residues 368–388 form a helical membrane-spanning segment; it reads TGMILAALAFCAATAVEVYVI. Residues 389-594 are Extracellular-facing; sequence KTVVEPPPAK…QANNIHIGWQ (206 aa). Residues 389–594 form an extracellular domain (ECD) region; sequence KTVVEPPPAK…QANNIHIGWQ (206 aa). Asn-481, Asn-513, and Asn-532 each carry an N-linked (GlcNAc...) asparagine glycan. Residues 595-615 traverse the membrane as a helical segment; it reads IPQYVFLTAGEVMFSITGLEF. Residues 616–626 are Cytoplasmic-facing; that stretch reads SYSQAPASMKS. The helical transmembrane segment at 627–647 threads the bilayer; it reads VLQAGWLMTVAFGNVIVLIVA. The Extracellular portion of the chain corresponds to 648 to 657; it reads EGAGMEQWVE. The chain crosses the membrane as a helical span at residues 658–678; sequence FLLFAALLVAVSIIFSIMAYF. Over 679-719 the chain is Cytoplasmic; that stretch reads YTYVDPDQLDKLFKEDGDGGKVESSKKDELSLGDMPKQTKM. The span at 695–708 shows a compositional bias: basic and acidic residues; it reads GDGGKVESSKKDEL. The interval 695–719 is disordered; sequence GDGGKVESSKKDELSLGDMPKQTKM.

This sequence belongs to the major facilitator superfamily. Proton-dependent oligopeptide transporter (POT/PTR) (TC 2.A.17) family. Expressed in kidney, brain and gut. Also expressed weakly in eye, gill and skeletal muscle.

Its subcellular location is the apical cell membrane. It localises to the cytoplasmic vesicle. It is found in the phagosome membrane. The protein resides in the cell membrane. It carries out the reaction a dipeptide(out) + 2 H(+)(out) = a dipeptide(in) + 2 H(+)(in). The catalysed reaction is N-acetyl-D-muramoyl-L-alanyl-D-isoglutamine(out) + 3 H(+)(out) = N-acetyl-D-muramoyl-L-alanyl-D-isoglutamine(in) + 3 H(+)(in). It catalyses the reaction glycyl-L-leucine(out) + 2 H(+)(out) = glycyl-L-leucine(in) + 2 H(+)(in). The enzyme catalyses glycyl-L-lysine(out) + 2 H(+)(out) = glycyl-L-lysine(in) + 2 H(+)(in). It carries out the reaction glycyl-L-glutamate(out) + 3 H(+)(out) = glycyl-L-glutamate(in) + 3 H(+)(in). The catalysed reaction is L-alanyl-L-alanine(out) + 2 H(+)(out) = L-alanyl-L-alanine(in) + 2 H(+)(in). It catalyses the reaction an L-amino acid tripeptide(out) + 2 H(+)(out) = an L-amino acid tripeptide(in) + 2 H(+)(in). The enzyme catalyses carnosine(out) + 2 H(+)(out) = carnosine(in) + 2 H(+)(in). Proton-coupled amino-acid transporter that transports oligopeptides of 2 to 4 amino acids with a preference for dipeptides. Transports neutral and anionic dipeptides with a proton to peptide stoichiometry of 2:1 or 3:1. The sequence is that of Solute carrier family 15 member 2 from Danio rerio (Zebrafish).